We begin with the raw amino-acid sequence, 156 residues long: Small ribosomal subunit protein uS7c (156 aa).

The protein belongs to the universal ribosomal protein uS7 family. Part of the 30S ribosomal subunit.

It is found in the plastid. The protein resides in the chloroplast. Its function is as follows. One of the primary rRNA binding proteins, it binds directly to 16S rRNA where it nucleates assembly of the head domain of the 30S subunit. The chain is Small ribosomal subunit protein uS7c (rps7) from Chara vulgaris (Common stonewort).